The chain runs to 239 residues: Ribonuclease PH (239 aa).

Phosphate-binding positions include Arg-86 and 124-126; that span reads GTR.

The protein belongs to the RNase PH family. Homohexameric ring arranged as a trimer of dimers.

It catalyses the reaction tRNA(n+1) + phosphate = tRNA(n) + a ribonucleoside 5'-diphosphate. In terms of biological role, phosphorolytic 3'-5' exoribonuclease that plays an important role in tRNA 3'-end maturation. Removes nucleotide residues following the 3'-CCA terminus of tRNAs; can also add nucleotides to the ends of RNA molecules by using nucleoside diphosphates as substrates, but this may not be physiologically important. Probably plays a role in initiation of 16S rRNA degradation (leading to ribosome degradation) during starvation. The polypeptide is Ribonuclease PH (Allorhizobium ampelinum (strain ATCC BAA-846 / DSM 112012 / S4) (Agrobacterium vitis (strain S4))).